The chain runs to 473 residues: Arginine biosynthesis bifunctional protein ArgJ, mitochondrial (473 aa).

6 residues coordinate substrate: T201, K230, T241, E328, N468, and T473. The Nucleophile role is filled by T241.

This sequence belongs to the ArgJ family. Heterodimer of an alpha and a beta chain. In terms of processing, the alpha and beta chains are autoproteolytically processed from a single precursor protein within the mitochondrion.

Its subcellular location is the mitochondrion matrix. The enzyme catalyses N(2)-acetyl-L-ornithine + L-glutamate = N-acetyl-L-glutamate + L-ornithine. It carries out the reaction L-glutamate + acetyl-CoA = N-acetyl-L-glutamate + CoA + H(+). It participates in amino-acid biosynthesis; L-arginine biosynthesis; L-ornithine and N-acetyl-L-glutamate from L-glutamate and N(2)-acetyl-L-ornithine (cyclic): step 1/1. It functions in the pathway amino-acid biosynthesis; L-arginine biosynthesis; N(2)-acetyl-L-ornithine from L-glutamate: step 1/4. Functionally, catalyzes two activities which are involved in the cyclic version of arginine biosynthesis: the synthesis of acetylglutamate from glutamate and acetyl-CoA, and of ornithine by transacetylation between acetylornithine and glutamate. In Ajellomyces capsulatus (strain H143) (Darling's disease fungus), this protein is Arginine biosynthesis bifunctional protein ArgJ, mitochondrial.